The chain runs to 381 residues: Alkanesulfonate monooxygenase (381 aa).

Belongs to the SsuD family. As to quaternary structure, homotetramer.

It catalyses the reaction an alkanesulfonate + FMNH2 + O2 = an aldehyde + FMN + sulfite + H2O + 2 H(+). Functionally, catalyzes the desulfonation of aliphatic sulfonates. In Escherichia coli (strain SMS-3-5 / SECEC), this protein is Alkanesulfonate monooxygenase.